The primary structure comprises 383 residues: MAKHLFTSESVSEGHPDKIADQISDAVLDAILAQDPKARVACETYVKTGMVLVGGEVTTSAWVDIEELTRKTVREIGYVHSDMGFDADSCAVLNAIGKQSPDINQGVDRADPKEQGAGDQGLMFGYASNETDILMPAPITYAHALVKRQSEVRKDGTLPWLRPDAKSQVTFAYEDNKIVGIDAIVLSTQHSPDIAQADLIEGVMETIIKPVLPAQWLNKDTKYFINPTGRFVIGGPMGDCGLTGRKIIVDTYGGMARHGGGAFSGKDPSKVDRSAAYAARYVAKNIVAAGLADRCEIQVSYAIGVAEPTSISVETFGTGKVSEEVLIKLVRQHFDLRPYGLTEMLNLARPIYQATAAYGHFGRNEFPWEATDKADALRADAGL.

Histidine 15 serves as a coordination point for ATP. Aspartate 17 provides a ligand contact to Mg(2+). Glutamate 43 lines the K(+) pocket. L-methionine contacts are provided by glutamate 56 and glutamine 99. The tract at residues 99–109 is flexible loop; sequence QSPDINQGVDR. ATP is bound by residues 164–166, 230–231, aspartate 239, 245–246, alanine 262, and lysine 266; these read DAK, RF, and RK. An L-methionine-binding site is contributed by aspartate 239. Lysine 270 contacts L-methionine.

Belongs to the AdoMet synthase family. Homotetramer; dimer of dimers. Requires Mg(2+) as cofactor. K(+) serves as cofactor.

It is found in the cytoplasm. The enzyme catalyses L-methionine + ATP + H2O = S-adenosyl-L-methionine + phosphate + diphosphate. Its pathway is amino-acid biosynthesis; S-adenosyl-L-methionine biosynthesis; S-adenosyl-L-methionine from L-methionine: step 1/1. Its function is as follows. Catalyzes the formation of S-adenosylmethionine (AdoMet) from methionine and ATP. The overall synthetic reaction is composed of two sequential steps, AdoMet formation and the subsequent tripolyphosphate hydrolysis which occurs prior to release of AdoMet from the enzyme. The sequence is that of S-adenosylmethionine synthase from Shewanella sp. (strain ANA-3).